We begin with the raw amino-acid sequence, 270 residues long: Glutamate 5-kinase (270 aa).

Lysine 17 contributes to the ATP binding site. Substrate is bound by residues serine 57, aspartate 144, and asparagine 160. ATP-binding positions include 180–181 (SD) and 222–228 (TGGMTSK).

This sequence belongs to the glutamate 5-kinase family.

It localises to the cytoplasm. It catalyses the reaction L-glutamate + ATP = L-glutamyl 5-phosphate + ADP. Its pathway is amino-acid biosynthesis; L-proline biosynthesis; L-glutamate 5-semialdehyde from L-glutamate: step 1/2. Functionally, catalyzes the transfer of a phosphate group to glutamate to form L-glutamate 5-phosphate. In Lactococcus lactis subsp. cremoris (strain SK11), this protein is Glutamate 5-kinase.